A 539-amino-acid polypeptide reads, in one-letter code: Chaperonin GroEL (539 aa).

Residues 29–32 (TLGP), 86–90 (DGTTT), Gly413, 477–479 (DAL), and Asp493 each bind ATP.

The protein belongs to the chaperonin (HSP60) family. Forms a cylinder of 14 subunits composed of two heptameric rings stacked back-to-back. Interacts with the co-chaperonin GroES.

It localises to the cytoplasm. It catalyses the reaction ATP + H2O + a folded polypeptide = ADP + phosphate + an unfolded polypeptide.. Functionally, together with its co-chaperonin GroES, plays an essential role in assisting protein folding. The GroEL-GroES system forms a nano-cage that allows encapsulation of the non-native substrate proteins and provides a physical environment optimized to promote and accelerate protein folding. This chain is Chaperonin GroEL, found in Clostridium perfringens (strain 13 / Type A).